A 666-amino-acid polypeptide reads, in one-letter code: UvrABC system protein B (666 aa).

The 389-residue stretch at 26–414 (DSFQKGEKKV…KVVEQIIRPT (389 aa)) folds into the Helicase ATP-binding domain. 39-46 (GVTGSGKT) contributes to the ATP binding site. The short motif at 92 to 115 (YYDYYQPEAYVPSSDTFIEKDSSI) is the Beta-hairpin element. The Helicase C-terminal domain occupies 429–591 (QIEDLLVEIR…ITPLTIKKEV (163 aa)). Residues 625–660 (EVLKEKLREEMMKAAKELDFERAAILRDKMLSIQTE) form the UVR domain.

The protein belongs to the UvrB family. As to quaternary structure, forms a heterotetramer with UvrA during the search for lesions. Interacts with UvrC in an incision complex.

It localises to the cytoplasm. In terms of biological role, the UvrABC repair system catalyzes the recognition and processing of DNA lesions. A damage recognition complex composed of 2 UvrA and 2 UvrB subunits scans DNA for abnormalities. Upon binding of the UvrA(2)B(2) complex to a putative damaged site, the DNA wraps around one UvrB monomer. DNA wrap is dependent on ATP binding by UvrB and probably causes local melting of the DNA helix, facilitating insertion of UvrB beta-hairpin between the DNA strands. Then UvrB probes one DNA strand for the presence of a lesion. If a lesion is found the UvrA subunits dissociate and the UvrB-DNA preincision complex is formed. This complex is subsequently bound by UvrC and the second UvrB is released. If no lesion is found, the DNA wraps around the other UvrB subunit that will check the other stand for damage. The protein is UvrABC system protein B of Leptospira interrogans serogroup Icterohaemorrhagiae serovar copenhageni (strain Fiocruz L1-130).